The chain runs to 635 residues: MPVIRLPDGSERKFDGPVTVAEVAMNIGAGLARAALGGKVNGKAVDTSYLITDDADLSIITDRDAEGLAIIRHSTAHLLAQAVKQLFPDAQVTIGPVIENGFYYDFSYKRPFTPEDLQKIEARMQELAKRDIPIVRTVMERDEAVAYFQSIGEQYKAEIIGSIPADQEISLYTQDDFTDLCRGTHVPSTGKLKAFKLMKVAGAYWRGDSNNEMLQRIYGTAWAKKEDLDAYLHMLEEAEKRDHRKLGRQLDFFHMQDEAPGMVFWHPRGWVIWQEVEQYMRNMFREFGYQEVRTPTIMDRVMWEKSGHWQNYHDNMFTTASENRDYAVKPMNCPGHIQIFNSTLHSYRDLPLRLAEFGSCHRNEPSGALHGLMRVRGFTQDDAHIFCTEDQVKDEVADFIVMLYKAYKDFGFNEVLVKLSTRPEKRVGTDEAWDKAEEALAVALRQNNLDFELQPGEGAFYGPKIEFTLKDSLGRLWQCGTIQLDFNLPERLGAEYVDEDNSRKHPVMLHRAIVGSMERFLGILIENYAGAMPAWLAPVQAMVLNISDGQADYVSSVVAELRKNGFRVDSDLRNEKITYKIREHSLQKLPYLLIAGEREMQTGQVAVRTRKGEDLGSMPLSAFIERLKSDVADKV.

In terms of domain architecture, TGS spans 1 to 61; it reads MPVIRLPDGS…TDDADLSIIT (61 aa). The tract at residues 242 to 533 is catalytic; the sequence is DHRKLGRQLD…LIENYAGAMP (292 aa). C333, H384, and H510 together coordinate Zn(2+).

Belongs to the class-II aminoacyl-tRNA synthetase family. In terms of assembly, homodimer. It depends on Zn(2+) as a cofactor.

It is found in the cytoplasm. The catalysed reaction is tRNA(Thr) + L-threonine + ATP = L-threonyl-tRNA(Thr) + AMP + diphosphate + H(+). In terms of biological role, catalyzes the attachment of threonine to tRNA(Thr) in a two-step reaction: L-threonine is first activated by ATP to form Thr-AMP and then transferred to the acceptor end of tRNA(Thr). Also edits incorrectly charged L-seryl-tRNA(Thr). The sequence is that of Threonine--tRNA ligase from Methylobacillus flagellatus (strain ATCC 51484 / DSM 6875 / VKM B-1610 / KT).